The chain runs to 444 residues: MRKEWVEKRKKDSVRTQMYYARQGIVTEEMEYVAKVEGLDPELIRKEVARGRMIIPANINHLHQKPMAIGIAAKCKINANIGSSALASDAAGEVEKVKVCQKYGADTIMDLSTGGDLDAIREEVIKHAEVPIGTVPIYQILHDCNNKIEDLTIDKMLEVIERQAQQGVSYFTIHAGFLLRFMPLVAKRKMGIVSRGGSLMAAWMMHYHKENPFYTAFDDILDICRKYDVSLSLGDSLRPGCLADASDDAQLEELKVLGELTLKAWDKDVQVMIEGPGHVPMNQIERNIKIERDYCHEAPFYVLGPLVTDIAAGYDHLASAIGAAMAGWYGASMLCYVTPKEHLGLPNAEDVREGIVAYKIAAHAADIARGRKGARDVDDAMSDARYKFDWNKQFELALDPDRAREYHDETLPQDVFKEAEFCSMCGPKFCSYKITQDILEKHGA.

Substrate-binding positions include N80, M109, Y138, H174, 194 to 196 (SRG), 235 to 238 (DSLR), and E274. H278 serves as a coordination point for Zn(2+). Y301 is a substrate binding site. H342 provides a ligand contact to Zn(2+). Residues C422, C425, and C430 each contribute to the [4Fe-4S] cluster site.

This sequence belongs to the ThiC family. In terms of assembly, homodimer. It depends on [4Fe-4S] cluster as a cofactor.

It catalyses the reaction 5-amino-1-(5-phospho-beta-D-ribosyl)imidazole + S-adenosyl-L-methionine = 4-amino-2-methyl-5-(phosphooxymethyl)pyrimidine + CO + 5'-deoxyadenosine + formate + L-methionine + 3 H(+). It functions in the pathway cofactor biosynthesis; thiamine diphosphate biosynthesis. Functionally, catalyzes the synthesis of the hydroxymethylpyrimidine phosphate (HMP-P) moiety of thiamine from aminoimidazole ribotide (AIR) in a radical S-adenosyl-L-methionine (SAM)-dependent reaction. The polypeptide is Phosphomethylpyrimidine synthase (Nitratiruptor sp. (strain SB155-2)).